The sequence spans 79 residues: Acyl carrier protein (79 aa).

The region spanning Ser2 to Gln77 is the Carrier domain. Residue Ser37 is modified to O-(pantetheine 4'-phosphoryl)serine.

This sequence belongs to the acyl carrier protein (ACP) family. Post-translationally, 4'-phosphopantetheine is transferred from CoA to a specific serine of apo-ACP by AcpS. This modification is essential for activity because fatty acids are bound in thioester linkage to the sulfhydryl of the prosthetic group.

Its subcellular location is the cytoplasm. It participates in lipid metabolism; fatty acid biosynthesis. Carrier of the growing fatty acid chain in fatty acid biosynthesis. In Paracidovorax citrulli (strain AAC00-1) (Acidovorax citrulli), this protein is Acyl carrier protein.